Here is a 128-residue protein sequence, read N- to C-terminus: Small ribosomal subunit protein uS12 (128 aa).

The interval 1–29 (MPTINQLIRKGREPKERKSKSPALMGNPQ) is disordered. Aspartate 89 is modified (3-methylthioaspartic acid). Residues 106-128 (GVEGRRQGRSKYGAKRPKEGGKK) are disordered.

It belongs to the universal ribosomal protein uS12 family. Part of the 30S ribosomal subunit. Contacts proteins S8 and S17. May interact with IF1 in the 30S initiation complex.

With S4 and S5 plays an important role in translational accuracy. Its function is as follows. Interacts with and stabilizes bases of the 16S rRNA that are involved in tRNA selection in the A site and with the mRNA backbone. Located at the interface of the 30S and 50S subunits, it traverses the body of the 30S subunit contacting proteins on the other side and probably holding the rRNA structure together. The combined cluster of proteins S8, S12 and S17 appears to hold together the shoulder and platform of the 30S subunit. The polypeptide is Small ribosomal subunit protein uS12 (Dictyoglomus turgidum (strain DSM 6724 / Z-1310)).